A 355-amino-acid polypeptide reads, in one-letter code: Ubiquinone biosynthesis protein COQ4 homolog, mitochondrial (355 aa).

Zn(2+)-binding residues include H134, D135, H138, and E150.

It belongs to the COQ4 family. As to quaternary structure, component of a multi-subunit COQ enzyme complex. The cofactor is Zn(2+).

Its subcellular location is the mitochondrion inner membrane. It carries out the reaction a 4-hydroxy-3-methoxy-5-(all-trans-polyprenyl)benzoate + H(+) = a 2-methoxy-6-(all-trans-polyprenyl)phenol + CO2. Its pathway is cofactor biosynthesis; ubiquinone biosynthesis. Functionally, lyase that catalyzes the C1-decarboxylation of 4-hydroxy-3-methoxy-5-(all-trans-polyprenyl)benzoic acid into 2-methoxy-6-(all-trans-polyprenyl)phenol during ubiquinone biosynthesis. The protein is Ubiquinone biosynthesis protein COQ4 homolog, mitochondrial of Plasmodium yoelii yoelii.